A 511-amino-acid polypeptide reads, in one-letter code: ATP synthase subunit alpha 2 (511 aa).

173-180 (GDRQTGKS) contacts ATP.

Belongs to the ATPase alpha/beta chains family. F-type ATPases have 2 components, CF(1) - the catalytic core - and CF(0) - the membrane proton channel. CF(1) has five subunits: alpha(3), beta(3), gamma(1), delta(1), epsilon(1). CF(0) has three main subunits: a(1), b(2) and c(9-12). The alpha and beta chains form an alternating ring which encloses part of the gamma chain. CF(1) is attached to CF(0) by a central stalk formed by the gamma and epsilon chains, while a peripheral stalk is formed by the delta and b chains.

It localises to the cell inner membrane. It carries out the reaction ATP + H2O + 4 H(+)(in) = ADP + phosphate + 5 H(+)(out). In terms of biological role, produces ATP from ADP in the presence of a proton gradient across the membrane. The alpha chain is a regulatory subunit. This Nitrosospira multiformis (strain ATCC 25196 / NCIMB 11849 / C 71) protein is ATP synthase subunit alpha 2.